We begin with the raw amino-acid sequence, 854 residues long: Nucleolar MIF4G domain-containing protein 1 homolog (854 aa).

Disordered stretches follow at residues 1–38, 55–105, 120–161, and 217–306; these read MAKIKKKEAKAKPLTRKEQRKQKSEFKKQNKRLYFAGK, QSQL…DAEV, PLGK…KQRI, and RKWE…RDAE. Residues 15–28 are compositionally biased toward basic and acidic residues; it reads TRKEQRKQKSEFKK. Residues 60–71 show a composition bias toward basic residues; sequence KNKKKKRSKKPK. The span at 88–105 shows a compositional bias: acidic residues; the sequence is IDSDDDESIDSDFSDAEV. 2 stretches are compositionally biased toward basic and acidic residues: residues 135–156 and 217–238; these read RQDEEAVRRKELRQQKELESKS and RKWEEKQERKKKLKEQQEKEEA. Residues 242–289 show a composition bias toward acidic residues; sequence SDEEEDKEDRDEPMDNFSEDDSGSEGEDDDEDLTGEEEQSEEDSEQEE. Residues 290–306 are compositionally biased toward basic and acidic residues; the sequence is NAPKIKEDIYGRKRDAE. Residues 352–553 form the MIF4G domain; the sequence is LKQCKGLLNR…DILNAVKNNN (202 aa). In terms of domain architecture, MI spans 650–764; that stretch reads AERRNIFCII…QLSVLKVVDF (115 aa).

Belongs to the CWC22 family.

The protein resides in the nucleus. It localises to the nucleolus. The polypeptide is Nucleolar MIF4G domain-containing protein 1 homolog (Drosophila melanogaster (Fruit fly)).